A 502-amino-acid polypeptide reads, in one-letter code: Glutamate--tRNA ligase (502 aa).

The 'HIGH' region signature appears at 9-19 (PSPTGFPHVGT). Positions 250–254 (KLSKR) match the 'KMSKS' region motif. An ATP-binding site is contributed by K253.

It belongs to the class-I aminoacyl-tRNA synthetase family. Glutamate--tRNA ligase type 1 subfamily. As to quaternary structure, monomer.

The protein localises to the cytoplasm. The enzyme catalyses tRNA(Glu) + L-glutamate + ATP = L-glutamyl-tRNA(Glu) + AMP + diphosphate. Catalyzes the attachment of glutamate to tRNA(Glu) in a two-step reaction: glutamate is first activated by ATP to form Glu-AMP and then transferred to the acceptor end of tRNA(Glu). The chain is Glutamate--tRNA ligase from Acinetobacter baylyi (strain ATCC 33305 / BD413 / ADP1).